Reading from the N-terminus, the 261-residue chain is 1-(5-phosphoribosyl)-5-[(5-phosphoribosylamino)methylideneamino] imidazole-4-carboxamide isomerase (261 aa).

D8 serves as the catalytic Proton acceptor. The Proton donor role is filled by D139.

The protein belongs to the HisA/HisF family.

It localises to the cytoplasm. The enzyme catalyses 1-(5-phospho-beta-D-ribosyl)-5-[(5-phospho-beta-D-ribosylamino)methylideneamino]imidazole-4-carboxamide = 5-[(5-phospho-1-deoxy-D-ribulos-1-ylimino)methylamino]-1-(5-phospho-beta-D-ribosyl)imidazole-4-carboxamide. Its pathway is amino-acid biosynthesis; L-histidine biosynthesis; L-histidine from 5-phospho-alpha-D-ribose 1-diphosphate: step 4/9. In Janthinobacterium sp. (strain Marseille) (Minibacterium massiliensis), this protein is 1-(5-phosphoribosyl)-5-[(5-phosphoribosylamino)methylideneamino] imidazole-4-carboxamide isomerase.